Consider the following 338-residue polypeptide: MPVVTLAVDAMGGDHGLSVTVPAVAAMLSRHEHMHIILVGQLEPLTSALSQANIADHPRITVQPATEVVAMDDPVAVALRQKKDSSMRVAINMVKEGRAQAAVSAGNTGALMAVSRFVLKTLPGVDRPAICTAIPTANGHCHMLDLGANVDSEPAHLLQFALMGQAVVRAVDGVEHPRVALLNIGEEDIKGNEQIKEAAGLLREAQGLNYVGFVEGNGIFSGEADVVVCDGFVGNVSLKTMEGVAKMIGNMLRQEIKQSWLRKLCGLFALPVLIGLKKRMDPDHYNGASLVGLRGVVVKSHGGTSKEGFACALEVAQLEARRNVPSLISDALGQPGTH.

This sequence belongs to the PlsX family. In terms of assembly, homodimer. Probably interacts with PlsY.

The protein localises to the cytoplasm. It carries out the reaction a fatty acyl-[ACP] + phosphate = an acyl phosphate + holo-[ACP]. It participates in lipid metabolism; phospholipid metabolism. Its function is as follows. Catalyzes the reversible formation of acyl-phosphate (acyl-PO(4)) from acyl-[acyl-carrier-protein] (acyl-ACP). This enzyme utilizes acyl-ACP as fatty acyl donor, but not acyl-CoA. This chain is Phosphate acyltransferase, found in Alcanivorax borkumensis (strain ATCC 700651 / DSM 11573 / NCIMB 13689 / SK2).